Consider the following 324-residue polypeptide: NADH-ubiquinone oxidoreductase chain 1 (324 aa).

8 helical membrane-spanning segments follow: residues 9-29 (LINPLAYAVPVLIAVAFLTLV), 75-95 (ILFLTAPVLALILAMMLWAPM), 106-126 (LGILFIMAISSLAVYSILGSG), 146-166 (ISYEVSLGLILLSAVIFSGGY), 178-198 (TWLLLPLWPLAIMWFISTLAE), 212-232 (ELVSGFNVEYAAGPFALFFLA), 259-279 (ELMTISIATKTAMLSILFLWM), and 299-319 (FLPITLVLVLWHIALPIALAG).

Belongs to the complex I subunit 1 family. As to quaternary structure, core subunit of respiratory chain NADH dehydrogenase (Complex I) which is composed of 45 different subunits.

It is found in the mitochondrion inner membrane. It carries out the reaction a ubiquinone + NADH + 5 H(+)(in) = a ubiquinol + NAD(+) + 4 H(+)(out). Functionally, core subunit of the mitochondrial membrane respiratory chain NADH dehydrogenase (Complex I) which catalyzes electron transfer from NADH through the respiratory chain, using ubiquinone as an electron acceptor. Essential for the catalytic activity and assembly of complex I. In Danio rerio (Zebrafish), this protein is NADH-ubiquinone oxidoreductase chain 1 (mt-nd1).